Reading from the N-terminus, the 513-residue chain is Membrane-bound transcription factor site-2 protease homolog (513 aa).

Over M1–W60 the chain is Cytoplasmic. A helical transmembrane segment spans residues F61 to L81. The Lumenal segment spans residues Q82–S107. Residues L108–G128 form a helical membrane-spanning segment. A Zn(2+)-binding site is contributed by H125. E126 is an active-site residue. H129 provides a ligand contact to Zn(2+). At H129–G137 the chain is on the cytoplasmic side. Residues I138–F158 traverse the membrane as a helical segment. Over D159–N182 the chain is Lumenal. A helical transmembrane segment spans residues A183–F203. Residues Y204–S437 lie on the Cytoplasmic side of the membrane. The helical transmembrane segment at L438–Y458 threads the bilayer. Residues L459–Q485 are Lumenal-facing. The helical transmembrane segment at V486–G506 threads the bilayer. The Cytoplasmic segment spans residues L507–W513.

It belongs to the peptidase M50A family. Zn(2+) is required as a cofactor. As to expression, expressed in the vasculature of roots, cotyledons and leaves.

The protein resides in the golgi apparatus membrane. Functionally, metalloprotease that catalyzes the second step (site-2 cleavage) in the proteolytic activation of various factors, after site-1 cleavage. Part of a regulated intramembrane proteolysis (RIP) cascade. After ER stress, cleaves BZIP17 and BZIP28 proteins which function as stress sensors and transducers in ER stress signaling pathway. The N-terminal bZIP component is translocated to the nucleus, where it activates the expression and production of ER chaperones, as well as proteins involved in brassinosteroid (BR) signaling, which is required for stress acclimation and growth. The sequence is that of Membrane-bound transcription factor site-2 protease homolog (S2P) from Arabidopsis thaliana (Mouse-ear cress).